A 133-amino-acid polypeptide reads, in one-letter code: Small ribosomal subunit protein uS8 (133 aa).

The protein belongs to the universal ribosomal protein uS8 family. In terms of assembly, part of the 30S ribosomal subunit.

One of the primary rRNA binding proteins, it binds directly to 16S rRNA central domain where it helps coordinate assembly of the platform of the 30S subunit. The polypeptide is Small ribosomal subunit protein uS8 (Staphylothermus marinus (strain ATCC 43588 / DSM 3639 / JCM 9404 / F1)).